We begin with the raw amino-acid sequence, 777 residues long: Spastin (777 aa).

Low complexity-rich tracts occupy residues 1-24, 51-76, and 85-94; these read MVRTKSSSSSASSSSQKSPIKSNN, HAHSNNSNVSSSSRRAATATSGSSSP, and DDLTPTGSSP. Positions 1-103 are disordered; sequence MVRTKSSSSS…PRSCNGRGHS (103 aa). Over 1-116 the chain is Cytoplasmic; it reads MVRTKSSSSS…KQNLYVVSFP (116 aa). The required for localization to punctate cytoplasmic foci stretch occupies residues 1–215; that stretch reads MVRTKSSSSS…RALQPLEMAT (215 aa). The helical intramembrane region spans 117-137; the sequence is IIFLFNVLRSLIYQLFCIFRY. The Cytoplasmic portion of the chain corresponds to 138-777; it reads LYGASTKVLY…WSQDYGDITI (640 aa). Positions 213 to 777 are sufficient for interaction with microtubules and microtubule severing; sequence MATNRPGGGY…WSQDYGDITI (565 aa). Residues 238 to 313 form the MIT domain; the sequence is HRRAFEYISK…SMARDRLHFL (76 aa). Residues 327 to 474 form a disordered region; that stretch reads LKEKQPAPKQ…SSGSGASTPM (148 aa). 3 stretches are compositionally biased toward polar residues: residues 372-389, 406-425, and 444-460; these read QNGTSSSRPAPSGQTATG, PVTNKSQTLPRNLGSKTTVG, and QFSSGRNTPPQRSRTPI. Residues 461–471 show a composition bias toward low complexity; it reads NNNASSGSGAS. The required for interaction with microtubules stretch occupies residues 462–474; sequence NNASSGSGASTPM. 542-549 serves as a coordination point for ATP; sequence GPPGNGKT.

Belongs to the AAA ATPase family. Spastin subfamily. In terms of assembly, homohexamer. The homohexamer is stabilized by ATP-binding. The homohexamer may adopt a ring conformation through which microtubules pass prior to being severed. Interacts with microtubules. Interacts with atl; may be involved in microtubule dynamics.

The protein resides in the membrane. It is found in the cytoplasm. Its subcellular location is the cytoskeleton. The protein localises to the microtubule organizing center. It localises to the centrosome. The protein resides in the chromosome. It is found in the lipid droplet. The enzyme catalyses n ATP + n H2O + a microtubule = n ADP + n phosphate + (n+1) alpha/beta tubulin heterodimers.. Functionally, ATP-dependent microtubule severing protein. Stimulates microtubule minus-end depolymerization and poleward microtubule flux in the mitotic spindle. Regulates microtubule stability in the neuromuscular junction synapse. Involved in lipid metabolism by regulating the size and distribution of lipid droplets. Involved in axon regeneration by regulating microtubule severing. The protein is Spastin of Drosophila willistoni (Fruit fly).